The primary structure comprises 250 residues: UPF0494 membrane protein PB2B2.07c (250 aa).

3 consecutive transmembrane segments (helical) span residues 98–118 (WPLL…NFEV), 144–164 (IAIY…MFPL), and 179–199 (MIIA…GATI).

This sequence belongs to the UPF0494 family.

The protein resides in the cytoplasm. It localises to the endoplasmic reticulum. Its subcellular location is the golgi apparatus. The protein localises to the membrane. The polypeptide is UPF0494 membrane protein PB2B2.07c (Schizosaccharomyces pombe (strain 972 / ATCC 24843) (Fission yeast)).